A 418-amino-acid chain; its full sequence is 3-isopropylmalate dehydratase large subunit 1 (418 aa).

3 residues coordinate [4Fe-4S] cluster: Cys298, Cys358, and Cys361.

The protein belongs to the aconitase/IPM isomerase family. LeuC type 2 subfamily. In terms of assembly, heterodimer of LeuC and LeuD. [4Fe-4S] cluster serves as cofactor.

It carries out the reaction (2R,3S)-3-isopropylmalate = (2S)-2-isopropylmalate. It functions in the pathway amino-acid biosynthesis; L-leucine biosynthesis; L-leucine from 3-methyl-2-oxobutanoate: step 2/4. Functionally, catalyzes the isomerization between 2-isopropylmalate and 3-isopropylmalate, via the formation of 2-isopropylmaleate. The protein is 3-isopropylmalate dehydratase large subunit 1 of Methanopyrus kandleri (strain AV19 / DSM 6324 / JCM 9639 / NBRC 100938).